The following is a 561-amino-acid chain: NO-associated protein 1, chloroplastic/mitochondrial (561 aa).

A chloroplast and mitochondrion-targeting transit peptide spans 1-31 (MALRTLSTFPSLPRRHTTTRREPNLTVIYRN). Residues 108-111 (CYGC), 166-174 (YPGGKQFVS), 223-226 (TKID), 260-261 (SK), and 289-294 (NVGKSA) each bind GTP. The region spanning 175-351 (ADELREKLSH…LYDTPGVHLH (177 aa)) is the CP-type G domain.

Belongs to the TRAFAC class YlqF/YawG GTPase family. NOA1 subfamily. Expressed in aleurone layer and the embryo.

It localises to the mitochondrion. Its subcellular location is the plastid. It is found in the chloroplast. The catalysed reaction is 2 L-arginine + 3 NADPH + 4 O2 + H(+) = 2 L-citrulline + 2 nitric oxide + 3 NADP(+) + 4 H2O. Stimulated by calcium/calmodulin. Inhibited by L-NAME. Not activated by tetrahydrobiopterin (BH4), FAD, FMN, or heme. Exhibits cGTPase activity; binds and hydrolyzes specifically GTP. May participate in ribosome assembly and stability and thus regulates protein synthesis in chloroplasts. The GTPase activity requires MgCl(2)and the presence of either KCl or (NH(4))(2)SO(4). Involved in the post-transcriptional regulation of the methylerythritol phosphate (MEP) pathway. Involved in chlorophyll-a fluorescence regulation. Functionally, may mediate the production or accumulation of nitric oxide (NO) which is a messenger molecule involved in hormonal signaling and defense responses in plant. Acts as an antisenescence agent. Plays a crucial role in both extracellular calmodulin (ExtCaM)-triggered and salicylic acid (SA)-mediated H(2)O(2)-dependent stomatal closure. The chain is NO-associated protein 1, chloroplastic/mitochondrial (NOA1) from Arabidopsis thaliana (Mouse-ear cress).